We begin with the raw amino-acid sequence, 491 residues long: Probable allantoate deiminase (491 aa).

An N-terminal signal peptide occupies residues 1–32 (MALLLSYPRRHPSIHLLILSAYALFLLPILDG). An N-linked (GlcNAc...) asparagine glycan is attached at Asn-109. His-120, Asp-131, Glu-168, and His-234 together coordinate Mn(2+). Asn-265 and Asn-343 each carry an N-linked (GlcNAc...) asparagine glycan. His-454 contributes to the Mn(2+) binding site.

The protein belongs to the peptidase M20A family. In terms of assembly, homodimer. Mn(2+) is required as a cofactor.

It localises to the endoplasmic reticulum. The enzyme catalyses allantoate + H2O + 2 H(+) = (S)-2-ureidoglycine + NH4(+) + CO2. In terms of biological role, involved in the catabolism of purine nucleotides. The sequential activity of AAH, UGLYAH and UAH allows a complete purine breakdown without the intermediate generation of urea. In Oryza sativa subsp. japonica (Rice), this protein is Probable allantoate deiminase.